Here is a 294-residue protein sequence, read N- to C-terminus: Phosphatidylserine decarboxylase proenzyme (294 aa).

Catalysis depends on charge relay system; for autoendoproteolytic cleavage activity residues aspartate 88, histidine 145, and serine 248. Serine 248 serves as the catalytic Schiff-base intermediate with substrate; via pyruvic acid; for decarboxylase activity. Serine 248 is modified (pyruvic acid (Ser); by autocatalysis).

The protein belongs to the phosphatidylserine decarboxylase family. PSD-B subfamily. Prokaryotic type I sub-subfamily. In terms of assembly, heterodimer of a large membrane-associated beta subunit and a small pyruvoyl-containing alpha subunit. The cofactor is pyruvate. Is synthesized initially as an inactive proenzyme. Formation of the active enzyme involves a self-maturation process in which the active site pyruvoyl group is generated from an internal serine residue via an autocatalytic post-translational modification. Two non-identical subunits are generated from the proenzyme in this reaction, and the pyruvate is formed at the N-terminus of the alpha chain, which is derived from the carboxyl end of the proenzyme. The autoendoproteolytic cleavage occurs by a canonical serine protease mechanism, in which the side chain hydroxyl group of the serine supplies its oxygen atom to form the C-terminus of the beta chain, while the remainder of the serine residue undergoes an oxidative deamination to produce ammonia and the pyruvoyl prosthetic group on the alpha chain. During this reaction, the Ser that is part of the protease active site of the proenzyme becomes the pyruvoyl prosthetic group, which constitutes an essential element of the active site of the mature decarboxylase.

Its subcellular location is the cell membrane. The catalysed reaction is a 1,2-diacyl-sn-glycero-3-phospho-L-serine + H(+) = a 1,2-diacyl-sn-glycero-3-phosphoethanolamine + CO2. Its pathway is phospholipid metabolism; phosphatidylethanolamine biosynthesis; phosphatidylethanolamine from CDP-diacylglycerol: step 2/2. Functionally, catalyzes the formation of phosphatidylethanolamine (PtdEtn) from phosphatidylserine (PtdSer). The chain is Phosphatidylserine decarboxylase proenzyme from Herminiimonas arsenicoxydans.